Consider the following 400-residue polypeptide: Lysophospholipid transporter LplT (400 aa).

The next 12 membrane-spanning stretches (helical) occupy residues 19-39 (VIVAQFLSAFGDNALLFATLA), 53-73 (VLQMVFVGAYILFAPFVGQIA), 91-111 (AGAAGICLGVNPFVGYTLVGI), 139-159 (LMEASTIAAILLGSVAGGVLA), 164-184 (IAALVACALAYAGAVAANLFI), 195-213 (SWRLSAMTRSFFSACVVLW), 227-247 (LFWGAGVTLRFLLVLWVPVAL), 257-277 (YLNAMVAVGIVVGAGAAAKLV), 281-301 (TVSRCMPAGILIGVVVAIFSL), 304-324 (ALLPAYALLLLIGMLGGFFVV), 352-372 (NSAMLLMLGLYSLAVLVGVPA), and 373-393 (VAIGIGFGVLFALAIAALWIW).

This sequence belongs to the major facilitator superfamily. LplT (TC 2.A.1.42) family.

The protein localises to the cell inner membrane. In terms of biological role, catalyzes the facilitated diffusion of 2-acyl-glycero-3-phosphoethanolamine (2-acyl-GPE) into the cell. The chain is Lysophospholipid transporter LplT from Salmonella agona (strain SL483).